A 300-amino-acid chain; its full sequence is Ribonuclease HIII (300 aa).

Residues 83–300 (IPIIGSDEVG…THKAQALLTK (218 aa)) form the RNase H type-2 domain. A divalent metal cation contacts are provided by aspartate 89, glutamate 90, and aspartate 194.

It belongs to the RNase HII family. RnhC subfamily. Requires Mn(2+) as cofactor. Mg(2+) is required as a cofactor.

It localises to the cytoplasm. It carries out the reaction Endonucleolytic cleavage to 5'-phosphomonoester.. Functionally, endonuclease that specifically degrades the RNA of RNA-DNA hybrids. The sequence is that of Ribonuclease HIII from Streptococcus pyogenes serotype M3 (strain ATCC BAA-595 / MGAS315).